The primary structure comprises 143 residues: MAIERTFSIIKPDAVAKNHIGAIYNRFETAGLKIIASKMVHLSQEQAEGFYAEHSERPFFGALVAFMTSGPIMVQTLEGENAVLAHREILGATNPAEAAEGTIRADFAESIDENAAHGSDSVASAEREVAYFFSTEELCPRTR.

Residues K11, F59, R87, T93, R104, and N114 each coordinate ATP. H117 acts as the Pros-phosphohistidine intermediate in catalysis.

The protein belongs to the NDK family. Homotetramer. Mg(2+) is required as a cofactor.

The protein resides in the cytoplasm. It catalyses the reaction a 2'-deoxyribonucleoside 5'-diphosphate + ATP = a 2'-deoxyribonucleoside 5'-triphosphate + ADP. It carries out the reaction a ribonucleoside 5'-diphosphate + ATP = a ribonucleoside 5'-triphosphate + ADP. Its function is as follows. Major role in the synthesis of nucleoside triphosphates other than ATP. The ATP gamma phosphate is transferred to the NDP beta phosphate via a ping-pong mechanism, using a phosphorylated active-site intermediate. In Shewanella piezotolerans (strain WP3 / JCM 13877), this protein is Nucleoside diphosphate kinase.